A 360-amino-acid chain; its full sequence is Chorismate synthase (360 aa).

Position 46 (Arg-46) interacts with NADP(+). FMN is bound by residues 122-124 (RAS), Gly-282, 297-301 (KPTPS), and Arg-324.

Belongs to the chorismate synthase family. It depends on FMNH2 as a cofactor.

The enzyme catalyses 5-O-(1-carboxyvinyl)-3-phosphoshikimate = chorismate + phosphate. It participates in metabolic intermediate biosynthesis; chorismate biosynthesis; chorismate from D-erythrose 4-phosphate and phosphoenolpyruvate: step 7/7. Catalyzes the anti-1,4-elimination of the C-3 phosphate and the C-6 proR hydrogen from 5-enolpyruvylshikimate-3-phosphate (EPSP) to yield chorismate, which is the branch point compound that serves as the starting substrate for the three terminal pathways of aromatic amino acid biosynthesis. This reaction introduces a second double bond into the aromatic ring system. This chain is Chorismate synthase, found in Archaeoglobus fulgidus (strain ATCC 49558 / DSM 4304 / JCM 9628 / NBRC 100126 / VC-16).